The following is a 283-amino-acid chain: Release factor glutamine methyltransferase (283 aa).

S-adenosyl-L-methionine-binding positions include 120 to 124 (GTGSG), aspartate 143, phenylalanine 172, and asparagine 187. Residue 187–190 (NPPY) coordinates substrate.

This sequence belongs to the protein N5-glutamine methyltransferase family. PrmC subfamily.

The enzyme catalyses L-glutaminyl-[peptide chain release factor] + S-adenosyl-L-methionine = N(5)-methyl-L-glutaminyl-[peptide chain release factor] + S-adenosyl-L-homocysteine + H(+). Methylates the class 1 translation termination release factors RF1/PrfA and RF2/PrfB on the glutamine residue of the universally conserved GGQ motif. This chain is Release factor glutamine methyltransferase, found in Moorella thermoacetica (strain ATCC 39073 / JCM 9320).